A 67-amino-acid polypeptide reads, in one-letter code: Sec-independent protein translocase protein TatA (67 aa).

Residues 1–21 form a helical membrane-spanning segment; the sequence is MMPGPFELIVILVIVLLLFGG.

It belongs to the TatA/E family. In terms of assembly, the Tat system comprises two distinct complexes: a TatABC complex, containing multiple copies of TatA, TatB and TatC subunits, and a separate TatA complex, containing only TatA subunits. Substrates initially bind to the TatABC complex, which probably triggers association of the separate TatA complex to form the active translocon.

It localises to the cell inner membrane. In terms of biological role, part of the twin-arginine translocation (Tat) system that transports large folded proteins containing a characteristic twin-arginine motif in their signal peptide across membranes. TatA could form the protein-conducting channel of the Tat system. The sequence is that of Sec-independent protein translocase protein TatA from Ruthia magnifica subsp. Calyptogena magnifica.